The primary structure comprises 423 residues: uncharacterized protein (423 aa).

The BON domain occupies 75–145; sequence LHVVVTQPIA…PIVNNIKVAG (71 aa).

The protein belongs to the bacterial secretin family.

In terms of biological role, involved in the secretion of an unknown compound. This is an uncharacterized protein from Sinorhizobium fredii (strain NBRC 101917 / NGR234).